Consider the following 226-residue polypeptide: Glutathione peroxidase 3 (226 aa).

The N-terminal stretch at 1–24 (MARILRASCLLSLLLAGFVPPGRG) is a signal peptide. Residue Sec-73 is part of the active site. Residue Sec-73 is a non-standard amino acid, selenocysteine.

The protein belongs to the glutathione peroxidase family. In terms of assembly, homotetramer. In terms of tissue distribution, secreted in plasma.

It localises to the secreted. It catalyses the reaction 2 glutathione + H2O2 = glutathione disulfide + 2 H2O. The catalysed reaction is tert-butyl hydroperoxide + 2 glutathione = tert-butanol + glutathione disulfide + H2O. Protects cells and enzymes from oxidative damage, by catalyzing the reduction of hydrogen peroxide, lipid peroxides and organic hydroperoxide, by glutathione. This is Glutathione peroxidase 3 from Rattus norvegicus (Rat).